The primary structure comprises 438 residues: 3-phosphoshikimate 1-carboxyvinyltransferase (438 aa).

Residues Lys21, Ser22, and Arg26 each coordinate 3-phosphoshikimate. Lys21 is a binding site for phosphoenolpyruvate. The phosphoenolpyruvate site is built by Gly95 and Arg123. Positions 167, 169, 315, and 342 each coordinate 3-phosphoshikimate. Residue Gln169 participates in phosphoenolpyruvate binding. Asp315 acts as the Proton acceptor in catalysis. Phosphoenolpyruvate contacts are provided by Arg346 and Arg387.

Belongs to the EPSP synthase family. In terms of assembly, monomer.

It is found in the cytoplasm. The enzyme catalyses 3-phosphoshikimate + phosphoenolpyruvate = 5-O-(1-carboxyvinyl)-3-phosphoshikimate + phosphate. It participates in metabolic intermediate biosynthesis; chorismate biosynthesis; chorismate from D-erythrose 4-phosphate and phosphoenolpyruvate: step 6/7. Functionally, catalyzes the transfer of the enolpyruvyl moiety of phosphoenolpyruvate (PEP) to the 5-hydroxyl of shikimate-3-phosphate (S3P) to produce enolpyruvyl shikimate-3-phosphate and inorganic phosphate. The polypeptide is 3-phosphoshikimate 1-carboxyvinyltransferase (Coxiella burnetii (strain RSA 331 / Henzerling II)).